An 83-amino-acid polypeptide reads, in one-letter code: Cytochrome b559 subunit alpha (83 aa).

A helical membrane pass occupies residues 21–35; that stretch reads VIHSITIPSLFIAGW. His-23 lines the heme pocket.

This sequence belongs to the PsbE/PsbF family. In terms of assembly, heterodimer of an alpha subunit and a beta subunit. PSII is composed of 1 copy each of membrane proteins PsbA, PsbB, PsbC, PsbD, PsbE, PsbF, PsbH, PsbI, PsbJ, PsbK, PsbL, PsbM, PsbT, PsbX, PsbY, PsbZ, Psb30/Ycf12, at least 3 peripheral proteins of the oxygen-evolving complex and a large number of cofactors. It forms dimeric complexes. Requires heme b as cofactor.

It is found in the plastid. The protein localises to the chloroplast thylakoid membrane. Its function is as follows. This b-type cytochrome is tightly associated with the reaction center of photosystem II (PSII). PSII is a light-driven water:plastoquinone oxidoreductase that uses light energy to abstract electrons from H(2)O, generating O(2) and a proton gradient subsequently used for ATP formation. It consists of a core antenna complex that captures photons, and an electron transfer chain that converts photonic excitation into a charge separation. In Marchantia polymorpha (Common liverwort), this protein is Cytochrome b559 subunit alpha.